We begin with the raw amino-acid sequence, 165 residues long: Large ribosomal subunit protein uL22c (165 aa).

It belongs to the universal ribosomal protein uL22 family. In terms of assembly, part of the 50S ribosomal subunit.

The protein localises to the plastid. The protein resides in the chloroplast. In terms of biological role, this protein binds specifically to 23S rRNA. The globular domain of the protein is located near the polypeptide exit tunnel on the outside of the subunit, while an extended beta-hairpin is found that lines the wall of the exit tunnel in the center of the 70S ribosome. This is Large ribosomal subunit protein uL22c (rpl22) from Daucus carota (Wild carrot).